The following is a 442-amino-acid chain: Histidinol dehydrogenase (442 aa).

NAD(+) is bound by residues Tyr-136, Gln-197, and Asn-220. Substrate is bound by residues Ser-243, Gln-265, and His-268. The Zn(2+) site is built by Gln-265 and His-268. Catalysis depends on proton acceptor residues Glu-333 and His-334. Residues His-334, Asp-367, Glu-421, and His-426 each coordinate substrate. Asp-367 lines the Zn(2+) pocket. Position 426 (His-426) interacts with Zn(2+).

It belongs to the histidinol dehydrogenase family. The cofactor is Zn(2+).

The enzyme catalyses L-histidinol + 2 NAD(+) + H2O = L-histidine + 2 NADH + 3 H(+). Its pathway is amino-acid biosynthesis; L-histidine biosynthesis; L-histidine from 5-phospho-alpha-D-ribose 1-diphosphate: step 9/9. Catalyzes the sequential NAD-dependent oxidations of L-histidinol to L-histidinaldehyde and then to L-histidine. This Pseudomonas fluorescens (strain ATCC BAA-477 / NRRL B-23932 / Pf-5) protein is Histidinol dehydrogenase.